A 323-amino-acid polypeptide reads, in one-letter code: MKEIWLLAESESWDEAKEMLKDAIEIGFDGALVRRDFLERAEKLGRMKIVPIEDAVVKISSAEDQERALQREVVVLKFEDWKVIPLENIVAMKKSGKVIAAVDTIEDAKLALTTLERGADGIAVSGDRETLRKFYEVVKEEGERVELVRARVKEIRPLGVGERVCIDTVTLMTPGEGMLVGNQASFMFLVASESEESEYVASRPFRVNAGSVNAYLKVGDKTRYLAELKAGDEVEVVKFDGAVRKSYVGRVKIERRPLILIRAEVDGVEGSVILQNAETIKLVAPDGKHVSVAELKPGDEILVWLGKKARHFGVEVDEFIVER.

Belongs to the archaeal-type DHQ synthase family.

The enzyme catalyses 2-amino-2,3,7-trideoxy-D-lyxo-hept-6-ulosonate + NAD(+) + H2O = 3-dehydroquinate + NH4(+) + NADH + H(+). In terms of biological role, catalyzes the oxidative deamination and cyclization of 2-amino-3,7-dideoxy-D-threo-hept-6-ulosonic acid (ADH) to yield 3-dehydroquinate (DHQ), which is fed into the canonical shikimic pathway of aromatic amino acid biosynthesis. This Archaeoglobus fulgidus (strain ATCC 49558 / DSM 4304 / JCM 9628 / NBRC 100126 / VC-16) protein is 3-dehydroquinate synthase.